Reading from the N-terminus, the 237-residue chain is Fluoroquinolones export permease protein MT2761 (237 aa).

6 helical membrane-spanning segments follow: residues 20–40 (FLHA…PMPV), 49–69 (YVLV…TVFF), 96–116 (VLLA…HGLG), 119–139 (LLPL…VGFS), 147–167 (VTDW…PPVV), and 199–219 (LAPW…AGLC).

As to quaternary structure, the complex is composed of 2 ATP-binding proteins and 2 transmembrane proteins.

It is found in the cell membrane. Part of the ABC transporter complex involved in fluoroquinolones export. Probably responsible for the translocation of the substrate across the membrane. In Mycobacterium tuberculosis (strain CDC 1551 / Oshkosh), this protein is Fluoroquinolones export permease protein MT2761.